We begin with the raw amino-acid sequence, 299 residues long: Peroxisomal biogenesis factor 19 (299 aa).

The segment at 1–63 (MAAAEEDYGV…SPGDTAKDSL (63 aa)) is disordered. The residue at position 2 (alanine 2) is an N-acetylalanine. Residues 2–56 (AAAEEDYGVGAEADRELEELLESALDDFDKAKPSPAPPSTTTAPDASGPQKRSPG) form a docking to the peroxisome membrane and binding to PEX3 region. The segment at 2–91 (AAAEEDYGVG…QATAEFEKAM (90 aa)) is necessary for PEX19 function on peroxisome biogenesis. Residues 16–27 (RELEELLESALD) show a composition bias toward acidic residues. Residues serine 35, serine 54, and serine 66 each carry the phosphoserine modification. Threonine 236 bears the Phosphothreonine mark. Cysteine methyl ester is present on cysteine 296. Cysteine 296 carries S-farnesyl cysteine lipidation. Residues 297–299 (LIM) constitute a propeptide, removed in mature form.

The protein belongs to the peroxin-19 family. As to quaternary structure, interacts with a broad range of peroxisomal membrane proteins, including PEX3, PEX10, PEX11A, PEX11B, PEX12, PEX13, PEX14 and PEX16, PXMP2/PMP22, PXMP4/PMP24, SLC25A17/PMP34, ABCD1/ALDP, ABCD2/ALDRP, and ABCD3/PMP70. Also interacts with the tumor suppressor CDKN2A/p19ARF.

It localises to the cytoplasm. Its subcellular location is the peroxisome membrane. Necessary for early peroxisomal biogenesis. Acts both as a cytosolic chaperone and as an import receptor for peroxisomal membrane proteins (PMPs). Binds and stabilizes newly synthesized PMPs in the cytoplasm by interacting with their hydrophobic membrane-spanning domains, and targets them to the peroxisome membrane by binding to the integral membrane protein PEX3. Excludes CDKN2A from the nucleus and prevents its interaction with MDM2, which results in active degradation of TP53. This Pongo abelii (Sumatran orangutan) protein is Peroxisomal biogenesis factor 19 (PEX19).